We begin with the raw amino-acid sequence, 267 residues long: NAD kinase 2 (267 aa).

The active-site Proton acceptor is the Asp50. NAD(+)-binding positions include 50-51 (DG), Lys55, 122-123 (NE), Arg149, Asp151, 162-167 (TAYNKS), and Ala186.

This sequence belongs to the NAD kinase family. A divalent metal cation serves as cofactor.

It is found in the cytoplasm. It carries out the reaction NAD(+) + ATP = ADP + NADP(+) + H(+). In terms of biological role, involved in the regulation of the intracellular balance of NAD and NADP, and is a key enzyme in the biosynthesis of NADP. Catalyzes specifically the phosphorylation on 2'-hydroxyl of the adenosine moiety of NAD to yield NADP. The polypeptide is NAD kinase 2 (Listeria monocytogenes serovar 1/2a (strain ATCC BAA-679 / EGD-e)).